A 423-amino-acid polypeptide reads, in one-letter code: Histidine--tRNA ligase (423 aa).

Belongs to the class-II aminoacyl-tRNA synthetase family. In terms of assembly, homodimer.

The protein localises to the cytoplasm. The enzyme catalyses tRNA(His) + L-histidine + ATP = L-histidyl-tRNA(His) + AMP + diphosphate + H(+). The chain is Histidine--tRNA ligase from Phytoplasma mali (strain AT).